We begin with the raw amino-acid sequence, 273 residues long: Dermonecrotic toxin LsaSicTox-alphaIB1aii (273 aa).

His5 is an active-site residue. Mg(2+) contacts are provided by Glu25 and Asp27. Residue His41 is the Nucleophile of the active site. 2 disulfides stabilise this stretch: Cys45–Cys51 and Cys47–Cys190. Asp85 is a Mg(2+) binding site.

Belongs to the arthropod phospholipase D family. Class II subfamily. The cofactor is Mg(2+). In terms of tissue distribution, expressed by the venom gland.

The protein localises to the secreted. The catalysed reaction is an N-(acyl)-sphingosylphosphocholine = an N-(acyl)-sphingosyl-1,3-cyclic phosphate + choline. It catalyses the reaction an N-(acyl)-sphingosylphosphoethanolamine = an N-(acyl)-sphingosyl-1,3-cyclic phosphate + ethanolamine. It carries out the reaction a 1-acyl-sn-glycero-3-phosphocholine = a 1-acyl-sn-glycero-2,3-cyclic phosphate + choline. The enzyme catalyses a 1-acyl-sn-glycero-3-phosphoethanolamine = a 1-acyl-sn-glycero-2,3-cyclic phosphate + ethanolamine. Dermonecrotic toxins cleave the phosphodiester linkage between the phosphate and headgroup of certain phospholipids (sphingolipid and lysolipid substrates), forming an alcohol (often choline) and a cyclic phosphate. This toxin acts on sphingomyelin (SM). It may also act on ceramide phosphoethanolamine (CPE), lysophosphatidylcholine (LPC) and lysophosphatidylethanolamine (LPE), but not on lysophosphatidylserine (LPS), and lysophosphatidylglycerol (LPG). It acts by transphosphatidylation, releasing exclusively cyclic phosphate products as second products. Induces dermonecrosis, hemolysis, increased vascular permeability, edema, inflammatory response, and platelet aggregation. This chain is Dermonecrotic toxin LsaSicTox-alphaIB1aii, found in Loxosceles sabina (Tucson recluse spider).